The following is a 121-amino-acid chain: UPF0102 protein BDI_2565 (121 aa).

It belongs to the UPF0102 family.

In Parabacteroides distasonis (strain ATCC 8503 / DSM 20701 / CIP 104284 / JCM 5825 / NCTC 11152), this protein is UPF0102 protein BDI_2565.